The sequence spans 248 residues: MASTVALKGRPLATLLRQLLAADAPPAATGRPVAAAPAASGKPVTAPAAATATNAASRRLYNTEGAPLRRYDVVDESGTDSGDEYDATDDGRRLTVPFFFSASDVLDPFGAPTSLGRLLALMEDAAVATAAAPGTNGLATAAARRGGWWVAKEDDDAVHLKVSMPGLGKEHVKVWAEQNSLVIKGEGEKDPEDDADAAPPRYTRRIELPADAFKMDKIKAEMKNGVLRVAVPKLKEEERKDVFQVNVE.

The N-terminal 32 residues, 1-32, are a transit peptide targeting the mitochondrion; that stretch reads MASTVALKGRPLATLLRQLLAADAPPAATGRP. The disordered stretch occupies residues 26–48; the sequence is PAATGRPVAAAPAASGKPVTAPA. A sHSP domain is found at 139–248; sequence ATAAARRGGW…RKDVFQVNVE (110 aa).

The protein belongs to the small heat shock protein (HSP20) family. In terms of assembly, may form oligomeric structures.

The protein resides in the mitochondrion. This chain is 26.2 kDa heat shock protein, mitochondrial (HSP26.2), found in Oryza sativa subsp. japonica (Rice).